Here is a 160-residue protein sequence, read N- to C-terminus: Cyclic pyranopterin monophosphate synthase (160 aa).

Substrate is bound by residues Leu74–His76 and Met112–Glu113. Residue Asp127 is part of the active site.

This sequence belongs to the MoaC family. In terms of assembly, homohexamer; trimer of dimers.

It catalyses the reaction (8S)-3',8-cyclo-7,8-dihydroguanosine 5'-triphosphate = cyclic pyranopterin phosphate + diphosphate. The protein operates within cofactor biosynthesis; molybdopterin biosynthesis. Functionally, catalyzes the conversion of (8S)-3',8-cyclo-7,8-dihydroguanosine 5'-triphosphate to cyclic pyranopterin monophosphate (cPMP). In Trichlorobacter lovleyi (strain ATCC BAA-1151 / DSM 17278 / SZ) (Geobacter lovleyi), this protein is Cyclic pyranopterin monophosphate synthase.